A 321-amino-acid chain; its full sequence is MISIKNVNKYYGKIQVLKDVSIEIESGEIFGIIGHSGAGKSTLLRCINGLEEYQEGSVLVSDKEVKSLNEKQMRDLRKELGMIFQHFSLLERKTVFDNVALPLECFGYSKAEIKKRVLELLEVVGISEKKNDKPRNLSGGQKQRVAIARALALNPQVLLCDEATSALDPNTTKSILSLLEDINKKLGITIIVVTHQMEVIKQICGRVAIMENGEVLEVGDTEEIFLRNTKGLRKLIGEESIILPKGTNIKILFPKDISNEAIITTMARELNIDVSIIFGKLEQFKDDILGSLIINISDKSGEQVKQYLTSKGIRWEEMINE.

The region spanning 2–237 (ISIKNVNKYY…NTKGLRKLIG (236 aa)) is the ABC transporter domain. An ATP-binding site is contributed by 34-41 (GHSGAGKS).

The protein belongs to the ABC transporter superfamily. Methionine importer (TC 3.A.1.24) family. In terms of assembly, the complex is composed of two ATP-binding proteins (MetN), two transmembrane proteins (MetI) and a solute-binding protein (MetQ).

It localises to the cell membrane. The enzyme catalyses L-methionine(out) + ATP + H2O = L-methionine(in) + ADP + phosphate + H(+). The catalysed reaction is D-methionine(out) + ATP + H2O = D-methionine(in) + ADP + phosphate + H(+). Its function is as follows. Part of the ABC transporter complex MetNIQ involved in methionine import. Responsible for energy coupling to the transport system. This chain is Methionine import ATP-binding protein MetN, found in Clostridioides difficile (strain 630) (Peptoclostridium difficile).